A 343-amino-acid polypeptide reads, in one-letter code: Major histocompatibility complex class I-related protein 1 (343 aa).

A signal peptide spans 1–18 (MMFLLPFLTVFLAKQSHT). The alpha-1 stretch occupies residues 19 to 105 (RTHSLRYFRL…RHLQRHYNHS (87 aa)). The segment at 19–197 (RTHSLRYFRL…EYGSDALERT (179 aa)) is antigen-binding cleft. The Extracellular portion of the chain corresponds to 19–298 (RTHSLRYFRL…QESGNTLLVA (280 aa)). Tyrosine 25 and arginine 27 together coordinate 8-(9H-purin-6-yl)-2-oxa-8-azabicyclo[3.3.1]nona-3,6-diene-4,6-dicarbaldehyde. 5-(2-oxoethylideneamino)-6-(D-ribitylamino)uracil-binding residues include arginine 27, serine 42, and lysine 61. Positions 27, 42, and 61 each coordinate 5-(2-oxopropylideneamino)-6-(D-ribitylamino)uracil. Residues arginine 27, serine 42, and lysine 61 each coordinate 7-hydroxy-6-methyl-8-(1-D-ribityl)lumazine. Lysine 61 and histidine 76 together coordinate 8-(9H-purin-6-yl)-2-oxa-8-azabicyclo[3.3.1]nona-3,6-diene-4,6-dicarbaldehyde. Lysine 61 contacts 2-amino-4-oxopteridine-6-carbaldehyde. Lysine 61 is a pyridoxal binding site. Residue asparagine 103 is glycosylated (N-linked (GlcNAc...) asparagine). The interval 106-197 (GLHTYQRMIG…EYGSDALERT (92 aa)) is alpha-2. 8-(9H-purin-6-yl)-2-oxa-8-azabicyclo[3.3.1]nona-3,6-diene-4,6-dicarbaldehyde is bound at residue arginine 112. Positions 112, 170, and 171 each coordinate 5-(2-oxoethylideneamino)-6-(D-ribitylamino)uracil. 5-(2-oxopropylideneamino)-6-(D-ribitylamino)uracil is bound by residues arginine 112, tyrosine 170, and glutamine 171. 7-hydroxy-6-methyl-8-(1-D-ribityl)lumazine is bound by residues arginine 112, tyrosine 170, and glutamine 171. 2 disulfides stabilise this stretch: cysteine 116-cysteine 179 and cysteine 218-cysteine 274. The segment at 198–289 (EHPVVRTTRK…GLQMVLEAPQ (92 aa)) is alpha-3. The Ig-like C1-type domain occupies 200–302 (PVVRTTRKET…NTLLVANTIS (103 aa)). Residues 290–298 (ESGNTLLVA) form a connecting peptide region. The chain crosses the membrane as a helical span at residues 299–319 (NTISGTIILIIVLAGVGALIW). The Cytoplasmic segment spans residues 320-343 (RRRSREPKEVMYQPTQVNEGSSPS).

As to quaternary structure, heterotrimer that consists of MR1, B2M and metabolite antigen. Major classes of metabolite ligands presented by MR1 include riboflavin-related antigens, pyrimidines and ribityl lumazines, nucleobase adducts and folate derivatives. Forms reversible covalent Schiff base complexes with microbial pyrimidine-based metabolite, which serves as a molecular switch triggering complete folding, stable association with B2M and translocation of the ternary complex from endoplasmic reticulum to the plasma membrane. Alternatively, forms non-Schiff base complexes with ribityl lumazines. On antigen-presenting cells, the ternary complex interacts with TCR on MR1-restricted T cells. Interacts with TAPBP and TAPBPL chaperones in the endoplasmic reticulum. TAPBP associated or not with MHC class I peptide loading complex binds ligand-free MR1 or MR1-B2M complex, providing for stable MR1 pools ready for metabolite antigen processing. TAPBPL interacts with MR1 in a ligand-independent way; this interaction may stabilize MR1 pool and facilitate ligand loading and dissociation. Structurally, MR1-B2M heterodimer adopts a topology similar to classical MHC class I molecules, with alpha-1 and alpha-2 domains of MR1 forming the antigen-binding cleft composed of two alpha-helices resting on a floor of 7-stranded anti-parallel beta-pleated sheet. MR1-B2M heterodimer (via alpha-helices) interacts with TCR (via CDR domains). N-glycosylated. Expressed in kidney, liver, testis, spleen, thymus, brain, and heart.

The protein resides in the cell membrane. It localises to the endoplasmic reticulum membrane. Its subcellular location is the golgi apparatus membrane. The protein localises to the early endosome membrane. It is found in the late endosome membrane. Antigen-presenting molecule specialized in displaying microbial pyrimidine-based metabolites to alpha-beta T cell receptors (TCR) on innate-type mucosal-associated invariant T (MAIT) cells. In complex with B2M preferentially presents riboflavin-derived metabolites to semi-invariant TCRs on MAIT cells, guiding immune surveillance of the microbial metabolome at mucosal epithelial barriers. Signature pyrimidine-based microbial antigens are generated via non-enzymatic condensation of metabolite intermediates of the riboflavin pathway with by-products arising from other metabolic pathways such as glycolysis. Typical potent antigenic metabolites are 5-(2-oxoethylideneamino)-6-D-ribitylaminouracil (5-OE-RU) and 5-(2-oxopropylideneamino)-6-D-ribitylaminouracil (5-OP-RU), products of condensation of 5-amino-6-D-ribityaminouracil (5-A-RU) with glyoxal or methylglyoxal by-products, respectively. May present microbial antigens to various MAIT cell subsets, providing for unique recognition of diverse microbes, including pathogens that do not synthesize riboflavin. Upon antigen recognition, elicits rapid innate-type MAIT cell activation to eliminate pathogenic microbes by directly killing infected cells. During T cell development, drives thymic selection and post-thymic terminal differentiation of MAIT cells in a process dependent on commensal microflora. Acts as an immune sensor of cancer cell metabolome. May present a tumor-specific or -associated metabolite essential for cancer cell survival to a pan-cancer TCR on a non-MAIT CD8-positive T cell clone, triggering T cell-mediated killing of a wide range of cancer cell types. May present tumor-enriched pyridoxal and pyridoxal 5'-phosphate antigens, enabling preferential recognition of cancer cells. Presents nucleobase carbonyl adducts generated during oxidative stress. Captures M3Ade, a nucleobase adduct composed of one adenine modified by a malondialdehyde trimer, for recognition by MR1-restricted T cell clones expressing a polyclonal TCR repertoire. The protein is Major histocompatibility complex class I-related protein 1 of Rattus norvegicus (Rat).